The sequence spans 196 residues: Small ribosomal subunit protein uS4c (196 aa).

Residues 16 to 40 (GALPGLTRKTPKSGSNLKKKFHSGK) form a disordered region. The 64-residue stretch at 89–152 (MRLDNTLFRL…RSKDLVRNSI (64 aa)) folds into the S4 RNA-binding domain.

It belongs to the universal ribosomal protein uS4 family. Part of the 30S ribosomal subunit. Contacts protein S5. The interaction surface between S4 and S5 is involved in control of translational fidelity.

The protein localises to the plastid. It localises to the chloroplast. One of the primary rRNA binding proteins, it binds directly to 16S rRNA where it nucleates assembly of the body of the 30S subunit. Its function is as follows. With S5 and S12 plays an important role in translational accuracy. The chain is Small ribosomal subunit protein uS4c (rps4) from Anthoxanthum odoratum (Sweet vernal grass).